We begin with the raw amino-acid sequence, 375 residues long: 23S rRNA (uracil(747)-C(5))-methyltransferase RlmC (375 aa).

[4Fe-4S] cluster-binding residues include cysteine 3, cysteine 11, cysteine 14, and cysteine 87. Positions 212, 241, 262, and 307 each coordinate S-adenosyl-L-methionine. Residue cysteine 334 is the Nucleophile of the active site.

Belongs to the class I-like SAM-binding methyltransferase superfamily. RNA M5U methyltransferase family. RlmC subfamily.

It carries out the reaction uridine(747) in 23S rRNA + S-adenosyl-L-methionine = 5-methyluridine(747) in 23S rRNA + S-adenosyl-L-homocysteine + H(+). Catalyzes the formation of 5-methyl-uridine at position 747 (m5U747) in 23S rRNA. This Shigella boydii serotype 18 (strain CDC 3083-94 / BS512) protein is 23S rRNA (uracil(747)-C(5))-methyltransferase RlmC.